Consider the following 364-residue polypeptide: Large ribosomal subunit protein bL27m (364 aa).

The N-terminal 19 residues, 1 to 19, are a transit peptide targeting the mitochondrion; that stretch reads MFSSSWQQVPKFVVQQVRT.

The protein belongs to the bacterial ribosomal protein bL27 family.

It localises to the mitochondrion. Its function is as follows. Component of the large subunit of mitochondrial ribosome. The chain is Large ribosomal subunit protein bL27m (MRPL2) from Kluyveromyces lactis (strain ATCC 8585 / CBS 2359 / DSM 70799 / NBRC 1267 / NRRL Y-1140 / WM37) (Yeast).